The following is a 502-amino-acid chain: ATP synthase subunit alpha (502 aa).

169-176 (GDRQTGKT) lines the ATP pocket.

This sequence belongs to the ATPase alpha/beta chains family. F-type ATPases have 2 components, CF(1) - the catalytic core - and CF(0) - the membrane proton channel. CF(1) has five subunits: alpha(3), beta(3), gamma(1), delta(1), epsilon(1). CF(0) has three main subunits: a(1), b(2) and c(9-12). The alpha and beta chains form an alternating ring which encloses part of the gamma chain. CF(1) is attached to CF(0) by a central stalk formed by the gamma and epsilon chains, while a peripheral stalk is formed by the delta and b chains.

The protein localises to the cell inner membrane. The catalysed reaction is ATP + H2O + 4 H(+)(in) = ADP + phosphate + 5 H(+)(out). In terms of biological role, produces ATP from ADP in the presence of a proton gradient across the membrane. The alpha chain is a regulatory subunit. This chain is ATP synthase subunit alpha, found in Thermodesulfovibrio yellowstonii (strain ATCC 51303 / DSM 11347 / YP87).